The chain runs to 192 residues: uncharacterized protein (192 aa).

Residues 29–160 (RRQAAVLIPL…PLDIQRRGHD (132 aa)) form the Nudix hydrolase domain. The short motif at 67–89 (GAVDSTDASLIAAALREAHEEVA) is the Nudix box element. E83 and E87 together coordinate Mg(2+).

Belongs to the Nudix hydrolase family. PCD1 subfamily. Mn(2+) serves as cofactor. The cofactor is Mg(2+).

In terms of biological role, probably mediates the hydrolysis of some nucleoside diphosphate derivatives. This is an uncharacterized protein from Enterobacter sp. (strain 638).